A 202-amino-acid polypeptide reads, in one-letter code: Glycerol-3-phosphate acyltransferase (202 aa).

A run of 6 helical transmembrane segments spans residues 2-22 (MIVV…GYVI), 54-74 (FIVT…PIWF), 85-105 (FFTH…YPIY), 120-140 (VVLG…FGVL), 141-161 (YIFK…VIGS), and 162-182 (LIIQ…ILIV).

It belongs to the PlsY family. In terms of assembly, probably interacts with PlsX.

Its subcellular location is the cell membrane. It carries out the reaction an acyl phosphate + sn-glycerol 3-phosphate = a 1-acyl-sn-glycero-3-phosphate + phosphate. The protein operates within lipid metabolism; phospholipid metabolism. Catalyzes the transfer of an acyl group from acyl-phosphate (acyl-PO(4)) to glycerol-3-phosphate (G3P) to form lysophosphatidic acid (LPA). This enzyme utilizes acyl-phosphate as fatty acyl donor, but not acyl-CoA or acyl-ACP. The protein is Glycerol-3-phosphate acyltransferase of Staphylococcus haemolyticus (strain JCSC1435).